Consider the following 782-residue polypeptide: Coiled-coil alpha-helical rod protein 1 (782 aa).

2 stretches are compositionally biased toward basic and acidic residues: residues 62 to 74 (ERDV…EPGR) and 208 to 218 (ETRRAGEAKEL). 2 disordered regions span residues 62–82 (ERDV…WGLE) and 182–218 (LTQA…AKEL). Coiled coils occupy residues 82 to 314 (EGSQ…ELTR), 344 to 437 (LMVQ…NAVS), and 498 to 691 (VADV…QQEG).

The protein localises to the cytoplasm. It is found in the nucleus. In terms of biological role, may be a regulator of keratinocyte proliferation or differentiation. This is Coiled-coil alpha-helical rod protein 1 (CCHCR1) from Pan paniscus (Pygmy chimpanzee).